The following is a 557-amino-acid chain: Glypican-1 (557 aa).

The N-terminal stretch at 1–23 is a signal peptide; it reads MELRTRGWWLLCAAAALVVCARG. Disulfide bonds link C32/C68, C62/C255, C69/C258, C190/C342, C245/C278, C267/C414, and C271/C400. N-linked (GlcNAc...) asparagine glycosylation is found at N79 and N116. The disordered stretch occupies residues 477–531; the sequence is FQDASDDGSGSGSGGGCPDDTCGRRVSKKSSSSRTPLTHALPGLSEQEGQKTSAA. 3 O-linked (Xyl...) (heparan sulfate) serine glycosylation sites follow: S485, S487, and S489. Residue S529 is the site of GPI-anchor amidated serine attachment. Positions 530–557 are cleaved as a propeptide — removed in mature form; that stretch reads AATCPEPHSFFLLFLVTLVLAAARPRWR.

It belongs to the glypican family. In terms of processing, S-nitrosylated in a Cu(2+)-dependent manner. Nitric acid (NO) is released from the nitrosylated cysteines by ascorbate or by some other reducing agent, in a Cu(2+) or Zn(2+) dependent manner. This free nitric oxide is then capable of cleaving the heparan sulfate side chains. Post-translationally, N- and O-glycosylated. N-glycosylation is mainly of the complex type containing sialic acid. O-glycosylated with heparan sulfate. The heparan sulfate chains can be cleaved either by the action of heparanase or, degraded by a deaminative process that uses nitric oxide (NO) released from the S-nitrosylated cysteines. This process is triggered by ascorbate, or by some other reducing agent, in a Cu(2+)- or Zn(2+) dependent manner. Cu(2+) ions are provided by ceruloproteins such as APP, PRNP or CP which associate with GCP1 in intracellular compartments or lipid rafts. This cell-associated glypican is further processed to give rise to a medium-released species.

The protein resides in the cell membrane. It localises to the endosome. Its subcellular location is the secreted. The protein localises to the extracellular space. In terms of biological role, cell surface proteoglycan that bears heparan sulfate. Binds, via the heparan sulfate side chains, alpha-4 (V) collagen and participates in Schwann cell myelination. May act as a catalyst in increasing the rate of conversion of prion protein PRPN(C) to PRNP(Sc) via associating (via the heparan sulfate side chains) with both forms of PRPN, targeting them to lipid rafts and facilitating their interaction. Required for proper skeletal muscle differentiation by sequestering FGF2 in lipid rafts preventing its binding to receptors (FGFRs) and inhibiting the FGF-mediated signaling. Binds Cu(2+) or Zn(2+) ions. The sequence is that of Glypican-1 (Gpc1) from Mus musculus (Mouse).